A 614-amino-acid chain; its full sequence is DNA mismatch repair protein MutL (614 aa).

The interval 355-411 (PLSTGRVSEADPSNYATQSKFDEKPRESGSQGQSSSISAPSSYSRGGEYSARSQPEL) is disordered. Residues 382-401 (SGSQGQSSSISAPSSYSRGG) show a composition bias toward low complexity.

This sequence belongs to the DNA mismatch repair MutL/HexB family.

Functionally, this protein is involved in the repair of mismatches in DNA. It is required for dam-dependent methyl-directed DNA mismatch repair. May act as a 'molecular matchmaker', a protein that promotes the formation of a stable complex between two or more DNA-binding proteins in an ATP-dependent manner without itself being part of a final effector complex. In Shewanella woodyi (strain ATCC 51908 / MS32), this protein is DNA mismatch repair protein MutL.